A 451-amino-acid chain; its full sequence is Trigger factor (451 aa).

The 82-residue stretch at 162 to 243 folds into the PPIase FKBP-type domain; the sequence is GDYAIIDITT…VQQSKERKLP (82 aa).

It belongs to the FKBP-type PPIase family. Tig subfamily.

It is found in the cytoplasm. It catalyses the reaction [protein]-peptidylproline (omega=180) = [protein]-peptidylproline (omega=0). Its function is as follows. Involved in protein export. Acts as a chaperone by maintaining the newly synthesized protein in an open conformation. Functions as a peptidyl-prolyl cis-trans isomerase. The protein is Trigger factor of Corynebacterium aurimucosum (strain ATCC 700975 / DSM 44827 / CIP 107346 / CN-1) (Corynebacterium nigricans).